The following is a 156-amino-acid chain: Ribonuclease pancreatic (156 aa).

A signal peptide spans 1–28 (MALEKSLALLPLLVLVLLVLGWVQPSLG). The segment covering 33–43 (AKKFQRQHMDS) has biased composition (basic and acidic residues). Positions 33–52 (AKKFQRQHMDSDGSPSSNPT) are disordered. 2 residues coordinate substrate: lysine 35 and arginine 38. The active-site Proton acceptor is histidine 40. 4 cysteine pairs are disulfide-bonded: cysteine 54/cysteine 112, cysteine 68/cysteine 123, cysteine 86/cysteine 138, and cysteine 93/cysteine 100. Asparagine 62 carries an N-linked (GlcNAc...) asparagine glycan. Substrate-binding positions include 69-73 (KPVNT), lysine 94, and arginine 113. N-linked (GlcNAc...) asparagine glycosylation is present at asparagine 116. The Proton donor role is filled by histidine 147.

This sequence belongs to the pancreatic ribonuclease family. As to quaternary structure, monomer. Interacts with and forms tight 1:1 complexes with RNH1. Dimerization of two such complexes may occur. Interaction with RNH1 inhibits this protein.

The protein resides in the secreted. It catalyses the reaction an [RNA] containing cytidine + H2O = an [RNA]-3'-cytidine-3'-phosphate + a 5'-hydroxy-ribonucleotide-3'-[RNA].. It carries out the reaction an [RNA] containing uridine + H2O = an [RNA]-3'-uridine-3'-phosphate + a 5'-hydroxy-ribonucleotide-3'-[RNA].. Endonuclease that catalyzes the cleavage of RNA on the 3' side of pyrimidine nucleotides. Acts on single-stranded and double-stranded RNA. This chain is Ribonuclease pancreatic (RNASE1), found in Saimiri sciureus (Common squirrel monkey).